The following is a 346-amino-acid chain: Tetraacyldisaccharide 4'-kinase (346 aa).

Residue 54-61 (TVGGAGKT) participates in ATP binding.

Belongs to the LpxK family.

The catalysed reaction is a lipid A disaccharide + ATP = a lipid IVA + ADP + H(+). It functions in the pathway glycolipid biosynthesis; lipid IV(A) biosynthesis; lipid IV(A) from (3R)-3-hydroxytetradecanoyl-[acyl-carrier-protein] and UDP-N-acetyl-alpha-D-glucosamine: step 6/6. Its function is as follows. Transfers the gamma-phosphate of ATP to the 4'-position of a tetraacyldisaccharide 1-phosphate intermediate (termed DS-1-P) to form tetraacyldisaccharide 1,4'-bis-phosphate (lipid IVA). In Sinorhizobium fredii (strain NBRC 101917 / NGR234), this protein is Tetraacyldisaccharide 4'-kinase.